We begin with the raw amino-acid sequence, 518 residues long: 2-isopropylmalate synthase (518 aa).

In terms of domain architecture, Pyruvate carboxyltransferase spans 5–268 (IIIFDTTLRD…DTRINTQEIH (264 aa)). Asp14, His202, His204, and Asn238 together coordinate Mn(2+). Residues 393-518 (TLDVITSQCI…DLKLHKIAGV (126 aa)) form a regulatory domain region.

This sequence belongs to the alpha-IPM synthase/homocitrate synthase family. LeuA type 1 subfamily. As to quaternary structure, homodimer. The cofactor is Mn(2+).

The protein resides in the cytoplasm. It carries out the reaction 3-methyl-2-oxobutanoate + acetyl-CoA + H2O = (2S)-2-isopropylmalate + CoA + H(+). It participates in amino-acid biosynthesis; L-leucine biosynthesis; L-leucine from 3-methyl-2-oxobutanoate: step 1/4. Functionally, catalyzes the condensation of the acetyl group of acetyl-CoA with 3-methyl-2-oxobutanoate (2-ketoisovalerate) to form 3-carboxy-3-hydroxy-4-methylpentanoate (2-isopropylmalate). The sequence is that of 2-isopropylmalate synthase from Pasteurella multocida (strain Pm70).